Here is a 338-residue protein sequence, read N- to C-terminus: Alcohol dehydrogenase (338 aa).

Positions 38, 61, 62, 92, 95, 98, 106, and 148 each coordinate Zn(2+).

This sequence belongs to the zinc-containing alcohol dehydrogenase family. Homotetramer. Requires Zn(2+) as cofactor.

It carries out the reaction a primary alcohol + NAD(+) = an aldehyde + NADH + H(+). The enzyme catalyses a secondary alcohol + NAD(+) = a ketone + NADH + H(+). It catalyses the reaction ethanol + NAD(+) = acetaldehyde + NADH + H(+). The catalysed reaction is 1-propanol + NAD(+) = propanal + NADH + H(+). It carries out the reaction butan-1-ol + NAD(+) = butanal + NADH + H(+). The enzyme catalyses propan-2-ol + NAD(+) = acetone + NADH + H(+). Functionally, psychrophilic alcohol dehydrogenase that exhibits a wide range of substrate specificity, oxidizing mainly primary and secondary aliphatic alcohols, utilizing NAD(+) as a cosubstrate. In vitro, shows highest reaction rates for ethanol as a substrate and gradually decreases its reaction rates as the length and branching of the carbon chain of the alcohol substrates increase. To a lesser extent, is also able to reduce aldehydes and ketones. Do not catalyze the further oxidation of aldehydes to carboxylic acids. Cannot use NADP(+) instead of NAD(+). This chain is Alcohol dehydrogenase, found in Moraxella sp. (strain TAE123).